A 373-amino-acid chain; its full sequence is Protein U3 (373 aa).

This sequence belongs to the herpesviridae US22 family.

The protein is Protein U3 (U3) of Human herpesvirus 6A (strain Uganda-1102) (HHV-6 variant A).